Here is a 267-residue protein sequence, read N- to C-terminus: 4-hydroxy-tetrahydrodipicolinate reductase (267 aa).

NAD(+) contacts are provided by residues Gly8 to Met13 and Asp34. Residue Arg35 participates in NADP(+) binding. NAD(+)-binding positions include Gly98–Thr100 and Ala122–Phe125. The Proton donor/acceptor role is filled by His155. His156 contacts (S)-2,3,4,5-tetrahydrodipicolinate. Residue Lys159 is the Proton donor of the active site. Gly165–Thr166 is a (S)-2,3,4,5-tetrahydrodipicolinate binding site.

It belongs to the DapB family.

It is found in the cytoplasm. It catalyses the reaction (S)-2,3,4,5-tetrahydrodipicolinate + NAD(+) + H2O = (2S,4S)-4-hydroxy-2,3,4,5-tetrahydrodipicolinate + NADH + H(+). The catalysed reaction is (S)-2,3,4,5-tetrahydrodipicolinate + NADP(+) + H2O = (2S,4S)-4-hydroxy-2,3,4,5-tetrahydrodipicolinate + NADPH + H(+). It functions in the pathway amino-acid biosynthesis; L-lysine biosynthesis via DAP pathway; (S)-tetrahydrodipicolinate from L-aspartate: step 4/4. Its function is as follows. Catalyzes the conversion of 4-hydroxy-tetrahydrodipicolinate (HTPA) to tetrahydrodipicolinate. The chain is 4-hydroxy-tetrahydrodipicolinate reductase from Pseudomonas putida (strain ATCC 700007 / DSM 6899 / JCM 31910 / BCRC 17059 / LMG 24140 / F1).